The following is a 324-amino-acid chain: DNA repair and recombination protein RadA (324 aa).

Position 114–121 (114–121 (GEFGSGKT)) interacts with ATP.

The protein belongs to the eukaryotic RecA-like protein family.

In terms of biological role, involved in DNA repair and in homologous recombination. Binds and assemble on single-stranded DNA to form a nucleoprotein filament. Hydrolyzes ATP in a ssDNA-dependent manner and promotes DNA strand exchange between homologous DNA molecules. The chain is DNA repair and recombination protein RadA from Sulfurisphaera tokodaii (strain DSM 16993 / JCM 10545 / NBRC 100140 / 7) (Sulfolobus tokodaii).